Here is a 485-residue protein sequence, read N- to C-terminus: Pre-glycoprotein polyprotein GP complex (485 aa).

A lipid anchor (N-myristoyl glycine; by host) is attached at Gly-2. Over 2 to 17 (GQFISFMQEIPTFLQE) the chain is Extracellular. Residues 18 to 33 (ALNIALVAVSLIAIIK) traverse the membrane as a helical segment. Residues 34–58 (GVVNLYKSGLFQFFVFLALAGRSCT) lie on the Cytoplasmic side of the membrane. Cys-57 contributes to the Zn(2+) binding site. The Extracellular segment spans residues 59-424 (EEAFKIGLHT…QGKTPLTLVD (366 aa)). Intrachain disulfides connect Cys-92–Cys-226, Cys-135–Cys-164, Cys-207–Cys-213, Cys-271–Cys-284, Cys-293–Cys-302, and Cys-356–Cys-377. Residues Asn-95 and Asn-105 are each glycosylated (N-linked (GlcNAc...) asparagine; by host). Asn-166 and Asn-178 each carry an N-linked (GlcNAc...) asparagine; by host glycan. The segment at 250–286 (LKAFFSWSLTDSSGKDTPGGYCLEEWMLVAAKMKCFG) is fusion. Residues 287–355 (NTAVAKCNLN…KIRELMSVPY (69 aa)) are HR1. N-linked (GlcNAc...) asparagine; by host glycosylation is found at Asn-357, Asn-365, Asn-382, and Asn-387. The segment at 360 to 423 (KFWYVNHTLS…RQGKTPLTLV (64 aa)) is HR2. A helical membrane pass occupies residues 425 to 445 (ICFWSTVFFTASLFLHLVGIP). Residues 446–485 (THRHIRGEACPLPHRLNSLGGCRCGKYPNLKKPTVWRRGH) are Cytoplasmic-facing. Positions 447, 449, 455, 459, 467, 469, and 485 each coordinate Zn(2+).

Belongs to the arenaviridae GPC protein family. As to quaternary structure, interacts with glycoprotein G2. Part of the GP complex (GP-C) together with glycoprotein G1 and glycoprotein G2. The GP-complex interacts with protein Z, which interacts with ribonucleocapsid; these interactions may induce virion budding. In terms of assembly, homotrimer; disulfide-linked. In pre-fusion state, G1 homotrimers bind G2 homotrimers via ionic interactions. Part of the GP complex (GP-C) together with glycoprotein G2 and the stable signal peptide. Interacts with host TFRC. The GP-complex interacts with protein Z, which interacts with ribonucleocapsid; these interactions may induce virion budding. Homotrimer. Interacts with the stable signal peptide. In pre-fusion state, G2 homotrimers bind G1 homotrimers via ionic interactions. Part of the GP complex (GP-C) together with glycoprotein G1 and the stable signal peptide. Acidification in the endosome triggers rearrangements, which ultimately leads to a 6 helix bundle formed by the two heptad repeat domains (HR1 and HR2) in post-fusion state. The GP-complex interacts with protein Z, which interacts with ribonucleocapsid; these interactions may induce virion budding. Post-translationally, specific enzymatic cleavages in vivo yield mature proteins. GP-C polyprotein is cleaved in the endoplasmic reticulum by the host protease MBTPS1. Only cleaved glycoprotein is incorporated into virions. The SSP remains stably associated with the GP complex following cleavage by signal peptidase and plays crucial roles in the trafficking of GP through the secretory pathway. In terms of processing, myristoylation is necessary for GP2-mediated fusion activity.

It localises to the virion membrane. The protein localises to the host endoplasmic reticulum membrane. The protein resides in the host Golgi apparatus membrane. Its subcellular location is the host cell membrane. Functions as a cleaved signal peptide that is retained as the third component of the GP complex (GP-C). Helps to stabilize the spike complex in its native conformation. The SSP is required for efficient glycoprotein expression, post-translational maturation cleavage of G1 and G2, glycoprotein transport to the cell surface plasma membrane, formation of infectious virus particles, and acid pH-dependent glycoprotein-mediated cell fusion. Its function is as follows. Forms the virion spikes together with glycoprotein G2. The glycoprotein spike trimers are connected to the underlying matrix. Mediates virus attachment to host TFRC. This attachment induces virion internalization predominantly through clathrin-mediated endocytosis. Functionally, forms the virion spikes together with glycoprotein G1. The glycoprotein spike trimers are connected to the underlying matrix. Class I viral fusion protein that directs fusion of viral and host endosomal membranes, leading to delivery of the nucleocapsid into the cytoplasm. Membrane fusion is mediated by irreversible conformational changes induced by acidification. The protein is Pre-glycoprotein polyprotein GP complex of Junin mammarenavirus (JUNV).